We begin with the raw amino-acid sequence, 317 residues long: Transaldolase A (317 aa).

The active-site Schiff-base intermediate with substrate is the Lys-132.

Belongs to the transaldolase family. Type 1 subfamily. In terms of assembly, homodimer.

It localises to the cytoplasm. The enzyme catalyses D-sedoheptulose 7-phosphate + D-glyceraldehyde 3-phosphate = D-erythrose 4-phosphate + beta-D-fructose 6-phosphate. It functions in the pathway carbohydrate degradation; pentose phosphate pathway; D-glyceraldehyde 3-phosphate and beta-D-fructose 6-phosphate from D-ribose 5-phosphate and D-xylulose 5-phosphate (non-oxidative stage): step 2/3. Its function is as follows. Transaldolase is important for the balance of metabolites in the pentose-phosphate pathway. This Pasteurella multocida (strain Pm70) protein is Transaldolase A (talA).